Reading from the N-terminus, the 120-residue chain is Large ribosomal subunit protein bL19 (120 aa).

The protein belongs to the bacterial ribosomal protein bL19 family.

In terms of biological role, this protein is located at the 30S-50S ribosomal subunit interface and may play a role in the structure and function of the aminoacyl-tRNA binding site. The protein is Large ribosomal subunit protein bL19 of Trichormus variabilis (strain ATCC 29413 / PCC 7937) (Anabaena variabilis).